The chain runs to 119 residues: DNA-binding protein MMP0157 (119 aa).

The segment covering M1 to Q12 has biased composition (basic and acidic residues). Positions M1–E35 are disordered.

It belongs to the PDCD5 family.

This chain is DNA-binding protein MMP0157, found in Methanococcus maripaludis (strain DSM 14266 / JCM 13030 / NBRC 101832 / S2 / LL).